A 343-amino-acid polypeptide reads, in one-letter code: Proto-oncogene serine/threonine-protein kinase mos (343 aa).

The Protein kinase domain occupies 63–339; sequence VCLMHRLGSG…LLQRDLKAFR (277 aa). ATP contacts are provided by residues 69–77 and K90; that span reads LGSGGFGSV. D198 serves as the catalytic Proton acceptor.

It belongs to the protein kinase superfamily. Ser/Thr protein kinase family. In terms of assembly, interacts with MAP2K1/MEK1.

The protein localises to the cytoplasm. The enzyme catalyses L-seryl-[protein] + ATP = O-phospho-L-seryl-[protein] + ADP + H(+). The catalysed reaction is L-threonyl-[protein] + ATP = O-phospho-L-threonyl-[protein] + ADP + H(+). Serine/threonine kinase involved in the regulation of MAPK signaling. Is an activator of the ERK1/2 signaling cascade playing an essential role in the stimulation of oocyte maturation. The polypeptide is Proto-oncogene serine/threonine-protein kinase mos (Mus musculus (Mouse)).